A 395-amino-acid polypeptide reads, in one-letter code: Formate-dependent phosphoribosylglycinamide formyltransferase (395 aa).

Residues 22–23 (EL) and E82 contribute to the N(1)-(5-phospho-beta-D-ribosyl)glycinamide site. ATP is bound by residues R115, K156, 161-166 (SSGKGQ), 196-199 (EGFI), and E204. The region spanning 120 to 309 (RLAAETLGLP…EFALHARAIL (190 aa)) is the ATP-grasp domain. E268 and E280 together coordinate Mg(2+). N(1)-(5-phospho-beta-D-ribosyl)glycinamide is bound by residues D287, K356, and 363 to 364 (RR).

It belongs to the PurK/PurT family. Homodimer.

The catalysed reaction is N(1)-(5-phospho-beta-D-ribosyl)glycinamide + formate + ATP = N(2)-formyl-N(1)-(5-phospho-beta-D-ribosyl)glycinamide + ADP + phosphate + H(+). The protein operates within purine metabolism; IMP biosynthesis via de novo pathway; N(2)-formyl-N(1)-(5-phospho-D-ribosyl)glycinamide from N(1)-(5-phospho-D-ribosyl)glycinamide (formate route): step 1/1. Functionally, involved in the de novo purine biosynthesis. Catalyzes the transfer of formate to 5-phospho-ribosyl-glycinamide (GAR), producing 5-phospho-ribosyl-N-formylglycinamide (FGAR). Formate is provided by PurU via hydrolysis of 10-formyl-tetrahydrofolate. The protein is Formate-dependent phosphoribosylglycinamide formyltransferase of Stenotrophomonas maltophilia (strain K279a).